The following is a 281-amino-acid chain: Acidic leucine-rich nuclear phosphoprotein 32-related protein (281 aa).

LRR repeat units follow at residues 29–52 (YESL…EKEL), 56–78 (FKNL…IPSI), 79–103 (ATLN…IVQN), and 105–128 (PNIK…TLKE). The region spanning 140-178 (NPFADNPNYRKELFEFLPNVKIIDCYNKEGMEVLSSDEE) is the LRRCT domain. Over residues 197 to 244 (FKDEDDEDEEFVPNDNEDDDEDDELDDDLEDEDMEDLDKEDLDKEDYD) the composition is skewed to acidic residues. Positions 197–281 (FKDEDDEDEE…DMDLKKTKLE (85 aa)) are disordered. The span at 245 to 266 (IDTKETEGVNKDEKSNKRKQDA) shows a compositional bias: basic and acidic residues.

Belongs to the ANP32 family.

The protein is Acidic leucine-rich nuclear phosphoprotein 32-related protein of Plasmodium falciparum (isolate 3D7).